Consider the following 607-residue polypeptide: Elongation factor 4 (607 aa).

Positions 11-193 (EKIRNFSIIA…QIVEKVPAPT (183 aa)) constitute a tr-type G domain. GTP is bound by residues 23–28 (DHGKST) and 140–143 (NKID).

The protein belongs to the TRAFAC class translation factor GTPase superfamily. Classic translation factor GTPase family. LepA subfamily.

It is found in the cell membrane. The enzyme catalyses GTP + H2O = GDP + phosphate + H(+). In terms of biological role, required for accurate and efficient protein synthesis under certain stress conditions. May act as a fidelity factor of the translation reaction, by catalyzing a one-codon backward translocation of tRNAs on improperly translocated ribosomes. Back-translocation proceeds from a post-translocation (POST) complex to a pre-translocation (PRE) complex, thus giving elongation factor G a second chance to translocate the tRNAs correctly. Binds to ribosomes in a GTP-dependent manner. The polypeptide is Elongation factor 4 (Streptococcus pneumoniae (strain P1031)).